The sequence spans 277 residues: Myelin proteolipid protein (277 aa).

Topologically, residues 1–10 (MGLLECCARC) are cytoplasmic. Residues Cys-6, Cys-7, and Cys-10 are each lipidated (S-palmitoyl cysteine). Residues 11–36 (LVGAPFASLVATGLCFFGVALFCGCG) traverse the membrane as a helical segment. Residues 37 to 59 (HEALTGTEKLIETYFSKNYQDYE) lie on the Extracellular side of the membrane. The helical transmembrane segment at 60–88 (YLINVIHAFQYVIYGTASFFFLYGALLLA) threads the bilayer. Residues 89–151 (EGFYTTGAVR…LGKWLGHPDK (63 aa)) are Cytoplasmic-facing. Cys-109 is lipidated: S-palmitoyl cysteine. Ser-114 carries the post-translational modification Phosphoserine. A phosphothreonine mark is found at Thr-116 and Thr-118. 2 S-palmitoyl cysteine lipidation sites follow: Cys-139 and Cys-141. The chain crosses the membrane as a helical span at residues 152–178 (FVGITYALTVVWLLVFACSAVPVYIYF). Over 179-238 (NTWTTCQSIAFPSKTSASIGTLCADARMYGVLPWNAFPGKVCGSNLLSICKTAEFQMTFH) the chain is Extracellular. Cystine bridges form between Cys-184/Cys-228 and Cys-201/Cys-220. Thr-199 is lipidated: O-palmitoyl threonine. A helical membrane pass occupies residues 239 to 268 (LFIAAFVGAAATLVSLLTFMIAATYNFAVL). The Cytoplasmic segment spans residues 269 to 277 (KLMGRGTKF).

The protein belongs to the myelin proteolipid protein family. As to quaternary structure, interacts with MAL.

The protein resides in the cell membrane. The protein localises to the myelin membrane. This is the major myelin protein from the central nervous system. It plays an important role in the formation or maintenance of the multilamellar structure of myelin. The polypeptide is Myelin proteolipid protein (PLP1) (Oryctolagus cuniculus (Rabbit)).